Here is a 2453-residue protein sequence, read N- to C-terminus: Nuclear receptor corepressor 1 (2453 aa).

A compositionally biased stretch (polar residues) spans 1-29; that stretch reads MSSSGYPPNQGAFSTEQSRYPSHSVQYTF. 3 disordered regions span residues 1–116, 147–177, and 206–231; these read MSSS…QVSD, PAFG…SKLS, and QQQL…VEQK. The segment at 1 to 373 is interaction with ZBTB33 and HEXIM1; that stretch reads MSSSGYPPNQ…QRGAGLSATI (373 aa). Residues 51-64 show a composition bias toward low complexity; sequence SQASQLLQQQQQQQ. 2 stretches are compositionally biased toward basic and acidic residues: residues 77–88 and 99–116; these read PGSDRPQERRSG and VDHD…QVSD. Residue Ser172 is modified to Phosphoserine. A coiled-coil region spans residues 174–216; sequence SKLSKEELIQSMDRVDREIAKVEQQILKLKKKQQQLEEEAAKP. Residues 212–221 are compositionally biased toward basic and acidic residues; sequence EAAKPPEPEK. Ser224 is subject to Phosphoserine. An interaction with SIN3A/B region spans residues 254-312; sequence FEGLGPKVELPLYNQPSDTKVYHENIKTNQVMRKKLILFFKRRNHARKQREQKICQRYD. Positions 299-328 form a coiled coil; sequence ARKQREQKICQRYDQLMEAWEKKVDRIENN. The 52-residue stretch at 435–486 folds into the SANT 1 domain; it reads QFMNVWTDHEKEIFKDKFIQHPKNFGLIASYLERKSVPDCVLYYYLTKKNEN. 2 disordered regions span residues 497–631 and 677–908; these read KRRG…TEEE and LLQQ…PERQ. A coiled-coil region spans residues 501–550; that stretch reads RNQQIARPSQEEKVEEKEEDKAEKTEKKEEEKKDDEEKDDKEDSKETTKE. Composition is skewed to basic and acidic residues over residues 509 to 531 and 541 to 556; these read SQEE…KEEE and KEDS…RTEA. Residues 592–604 are compositionally biased toward low complexity; that stretch reads EAAAANAAAAATE. The segment covering 605 to 616 has biased composition (pro residues); the sequence is EPPPPLPPPPEP. The SANT 2 domain occupies 622-673; sequence VETSRWTEEEMEVAKKGLVEHGRNWAAIAKMVGTKSEAQCKNFYFNYKRRHN. Residues 697–707 are compositionally biased toward polar residues; it reads QCESVASTVSA. Residues 708–727 show a composition bias toward acidic residues; it reads QEDEDIEASNEEENPEDSEG. Over residues 771–787 the composition is skewed to low complexity; sequence TTDPAPCASPSSAVPTT. The span at 851–885 shows a compositional bias: basic and acidic residues; the sequence is GEGDAKERDLESTSEKTEARDEDVVVAEQIERPEP. The residue at position 1011 (Ser1011) is a Phosphoserine. Residues 1034-1058 form a disordered region; the sequence is VRLPTTRPTRPPPPLIPSSKTTVAS. Lys1117 is covalently cross-linked (Glycyl lysine isopeptide (Lys-Gly) (interchain with G-Cter in SUMO1); alternate). A Glycyl lysine isopeptide (Lys-Gly) (interchain with G-Cter in SUMO2); alternate cross-link involves residue Lys1117. Ser1122 is modified (phosphoserine). Residue Lys1195 forms a Glycyl lysine isopeptide (Lys-Gly) (interchain with G-Cter in SUMO2) linkage. Phosphoserine occurs at positions 1206, 1207, 1274, 1292, and 1333. Lys1347 bears the N6-acetyllysine mark. Thr1378 carries the phosphothreonine modification. Residue Lys1400 forms a Glycyl lysine isopeptide (Lys-Gly) (interchain with G-Cter in SUMO2) linkage. Lys1423 participates in a covalent cross-link: Glycyl lysine isopeptide (Lys-Gly) (interchain with G-Cter in SUMO2); alternate. Lys1423 bears the N6-acetyllysine; alternate mark. Residues 1450 to 1544 are disordered; sequence GEPVRARHTS…SIPAKSPVPG (95 aa). Phosphoserine occurs at positions 1459 and 1481. Over residues 1459–1469 the composition is skewed to polar residues; it reads SVVSSGPSVLR. The span at 1495–1514 shows a compositional bias: polar residues; that stretch reads VSYQNTISRGSPMMNRTSDV. An interaction with C1D region spans residues 1510–2453; sequence RTSDVSSSKS…QYETLSDSDD (944 aa). A Glycyl lysine isopeptide (Lys-Gly) (interchain with G-Cter in SUMO2) cross-link involves residue Lys1525. A Phosphoserine modification is found at Ser1598. Disordered regions lie at residues 1697–1780 and 1902–1939; these read RPYN…VRTQ and ALPS…RTRG. Composition is skewed to basic and acidic residues over residues 1718–1745 and 1919–1937; these read AERE…RERI and AGKD…ELRT. Residues 1949–1953 carry the CORNR box 1 motif; sequence IDVII. The disordered stretch occupies residues 1959 to 2060; the sequence is SDKDARERGS…SSQSEGMGQV (102 aa). Positions 1968–1979 are enriched in low complexity; sequence SQSSDSSSSLSS. Phosphoserine is present on residues Ser1993 and Ser1997. The tract at residues 2050 to 2129 is ID1; sequence PSSQSEGMGQ…QSQTVLHPRP (80 aa). Residues 2065-2068 are required for interaction with RARA in the absence of its ligand; the sequence is RLIT. The CORNR box 2 signature appears at 2073–2077; it reads ICQII. The segment covering 2088–2124 has biased composition (polar residues); the sequence is SQASTSTFQTSPSALSSTPVRTKTSSRYSPESQSQTV. The disordered stretch occupies residues 2088-2174; sequence SQASTSTFQT…SPPQGPAVHE (87 aa). Phosphoserine is present on residues Ser2116, Ser2134, Ser2150, Ser2165, and Ser2198. Residues 2138–2156 are compositionally biased toward basic and acidic residues; sequence LVDKSRGSRPGKSPERSHI. The tract at residues 2226–2287 is ID2; sequence IFRKLNSSGG…EDIIRKALMG (62 aa). A CORNR box 3 motif is present at residues 2277–2281; that stretch reads LEDII. The disordered stretch occupies residues 2303 to 2396; that stretch reads PVGIMPGSAS…RPSSTGSTQF (94 aa). Over residues 2310-2319 the composition is skewed to low complexity; that stretch reads SASTSVVTSS. Thr2412 is subject to Phosphothreonine. Phosphoserine occurs at positions 2449 and 2451.

Belongs to the N-CoR nuclear receptor corepressors family. Forms a large corepressor complex that contains SIN3A/B and histone deacetylases HDAC1 and HDAC2. This complex associates with the thyroid receptor (TR) and the retinoid acid receptor (RAR) in the absence of ligand. Interacts directly with RARA; the interaction is facilitated with RARA trimethylation. Component of the N-Cor repressor complex, at least composed of CBFA2T3, HEXIM1, NCOR1, NCOR2, HDAC3, TBL1X, TBL1XR1, CORO2A and GPS2. Interacts with ZBTB33; the interaction serves to recruit the N-CoR complex to promoter regions containing methylated CpG dinucleotides. Interacts with TRIM28 and KDM3A. Interacts (via the RD1 domain) with BAZ1A (via its N-terminal); the interaction corepresses a number of NCOR1-regulated genes. Interacts with BCL6, C1D, DACH1, HEXIM1, HDAC7, RORA, RORC, SAP30, SIAH2, SIN3A and SIN3B. May interact with DEAF1. Interacts with RXRA. Interacts with SETD5. Interacts with VDR. Interacts with ZBTB7A. Interacts with AR. Interacts with HDAC3. Post-translationally, ubiquitinated; mediated by SIAH2 and leading to its subsequent proteasomal degradation. In terms of tissue distribution, ubiquitous.

The protein resides in the nucleus. Its function is as follows. Mediates transcriptional repression by certain nuclear receptors. Part of a complex which promotes histone deacetylation and the formation of repressive chromatin structures which may impede the access of basal transcription factors. Participates in the transcriptional repressor activity produced by BCL6. Recruited by ZBTB7A to the androgen response elements/ARE on target genes, negatively regulates androgen receptor signaling and androgen-induced cell proliferation. Mediates the NR1D1-dependent repression and circadian regulation of TSHB expression. The NCOR1-HDAC3 complex regulates the circadian expression of the core clock gene ARTNL/BMAL1 and the genes involved in lipid metabolism in the liver. The protein is Nuclear receptor corepressor 1 (Ncor1) of Mus musculus (Mouse).